The primary structure comprises 339 residues: Ketol-acid reductoisomerase (NADP(+)) (339 aa).

A KARI N-terminal Rossmann domain is found at 1-182; that stretch reads MRVYYDCDVN…GGGRSGIMKT (182 aa). Residues 24-27, S51, T53, and 83-86 contribute to the NADP(+) site; these read YGAQ and DELQ. H108 is a catalytic residue. An NADP(+)-binding site is contributed by G134. Positions 183–328 constitute a KARI C-terminal knotted domain; the sequence is TFREECETDL…DKIRSMMALT (146 aa). The Mg(2+) site is built by D191, E195, E227, and E231. S252 contributes to the substrate binding site.

This sequence belongs to the ketol-acid reductoisomerase family. Mg(2+) serves as cofactor.

It catalyses the reaction (2R)-2,3-dihydroxy-3-methylbutanoate + NADP(+) = (2S)-2-acetolactate + NADPH + H(+). The enzyme catalyses (2R,3R)-2,3-dihydroxy-3-methylpentanoate + NADP(+) = (S)-2-ethyl-2-hydroxy-3-oxobutanoate + NADPH + H(+). It participates in amino-acid biosynthesis; L-isoleucine biosynthesis; L-isoleucine from 2-oxobutanoate: step 2/4. Its pathway is amino-acid biosynthesis; L-valine biosynthesis; L-valine from pyruvate: step 2/4. Functionally, involved in the biosynthesis of branched-chain amino acids (BCAA). Catalyzes an alkyl-migration followed by a ketol-acid reduction of (S)-2-acetolactate (S2AL) to yield (R)-2,3-dihydroxy-isovalerate. In the isomerase reaction, S2AL is rearranged via a Mg-dependent methyl migration to produce 3-hydroxy-3-methyl-2-ketobutyrate (HMKB). In the reductase reaction, this 2-ketoacid undergoes a metal-dependent reduction by NADPH to yield (R)-2,3-dihydroxy-isovalerate. The sequence is that of Ketol-acid reductoisomerase (NADP(+)) from Bartonella bacilliformis (strain ATCC 35685 / KC583 / Herrer 020/F12,63).